The following is a 178-amino-acid chain: ATP synthase subunit b, chloroplastic (178 aa).

A helical membrane pass occupies residues 26–46 (TNLINIIILLIILFYFLKGLL).

The protein belongs to the ATPase B chain family. In terms of assembly, F-type ATPases have 2 components, F(1) - the catalytic core - and F(0) - the membrane proton channel. F(1) has five subunits: alpha(3), beta(3), gamma(1), delta(1), epsilon(1). F(0) has four main subunits: a(1), b(1), b'(1) and c(10-14). The alpha and beta chains form an alternating ring which encloses part of the gamma chain. F(1) is attached to F(0) by a central stalk formed by the gamma and epsilon chains, while a peripheral stalk is formed by the delta, b and b' chains.

It is found in the plastid. The protein resides in the chloroplast thylakoid membrane. In terms of biological role, f(1)F(0) ATP synthase produces ATP from ADP in the presence of a proton or sodium gradient. F-type ATPases consist of two structural domains, F(1) containing the extramembraneous catalytic core and F(0) containing the membrane proton channel, linked together by a central stalk and a peripheral stalk. During catalysis, ATP synthesis in the catalytic domain of F(1) is coupled via a rotary mechanism of the central stalk subunits to proton translocation. Component of the F(0) channel, it forms part of the peripheral stalk, linking F(1) to F(0). This is ATP synthase subunit b, chloroplastic from Vaucheria litorea (Yellow-green alga).